Here is a 93-residue protein sequence, read N- to C-terminus: MFKVNEYFDGTVKSIAFTQADGEATIGVMAAGEYEFGTAQREIMHVISGELSVKLPDSTDWETFATGNQFNVPANSKFQIKVKVDTAYLCEYR.

It belongs to the nucleoside phosphorylase PpnP family.

It carries out the reaction a purine D-ribonucleoside + phosphate = a purine nucleobase + alpha-D-ribose 1-phosphate. The catalysed reaction is adenosine + phosphate = alpha-D-ribose 1-phosphate + adenine. The enzyme catalyses cytidine + phosphate = cytosine + alpha-D-ribose 1-phosphate. It catalyses the reaction guanosine + phosphate = alpha-D-ribose 1-phosphate + guanine. It carries out the reaction inosine + phosphate = alpha-D-ribose 1-phosphate + hypoxanthine. The catalysed reaction is thymidine + phosphate = 2-deoxy-alpha-D-ribose 1-phosphate + thymine. The enzyme catalyses uridine + phosphate = alpha-D-ribose 1-phosphate + uracil. It catalyses the reaction xanthosine + phosphate = alpha-D-ribose 1-phosphate + xanthine. Its function is as follows. Catalyzes the phosphorolysis of diverse nucleosides, yielding D-ribose 1-phosphate and the respective free bases. Can use uridine, adenosine, guanosine, cytidine, thymidine, inosine and xanthosine as substrates. Also catalyzes the reverse reactions. This is Pyrimidine/purine nucleoside phosphorylase from Pseudomonas syringae pv. syringae (strain B728a).